Here is a 341-residue protein sequence, read N- to C-terminus: tRNA N6-adenosine threonylcarbamoyltransferase (341 aa).

Fe cation-binding residues include H111 and H115. Substrate is bound by residues 134–138, D167, G180, and N276; that span reads LVSGG. D304 contacts Fe cation.

Belongs to the KAE1 / TsaD family. The cofactor is Fe(2+).

The protein localises to the cytoplasm. The enzyme catalyses L-threonylcarbamoyladenylate + adenosine(37) in tRNA = N(6)-L-threonylcarbamoyladenosine(37) in tRNA + AMP + H(+). Its function is as follows. Required for the formation of a threonylcarbamoyl group on adenosine at position 37 (t(6)A37) in tRNAs that read codons beginning with adenine. Is involved in the transfer of the threonylcarbamoyl moiety of threonylcarbamoyl-AMP (TC-AMP) to the N6 group of A37, together with TsaE and TsaB. TsaD likely plays a direct catalytic role in this reaction. This is tRNA N6-adenosine threonylcarbamoyltransferase from Pseudomonas fluorescens (strain Pf0-1).